The sequence spans 526 residues: Na(+)/H(+) antiporter NhaB (526 aa).

Helical transmembrane passes span 14 to 34, 63 to 83, 99 to 119, 122 to 142, 146 to 166, 206 to 226, 239 to 259, 307 to 327, 357 to 377, 451 to 471, and 479 to 499; these read FLGY…LVNP, CYPL…GMTS, MLLV…LFVF, LLLR…AAAF, FLDA…FYGI, LLMH…VGEP, FVSF…CGIL, AVIG…VGLI, FTAL…QQLF, ATPN…APLI, and VIMA…CVEF.

The protein belongs to the NhaB Na(+)/H(+) (TC 2.A.34) antiporter family.

The protein localises to the cell inner membrane. It catalyses the reaction 2 Na(+)(in) + 3 H(+)(out) = 2 Na(+)(out) + 3 H(+)(in). In terms of biological role, na(+)/H(+) antiporter that extrudes sodium in exchange for external protons. In Pectobacterium carotovorum subsp. carotovorum (strain PC1), this protein is Na(+)/H(+) antiporter NhaB.